The following is a 377-amino-acid chain: Probable O-methyltransferase 3 (377 aa).

An S-adenosyl-L-methionine-binding site is contributed by D241. Catalysis depends on H279, which acts as the Proton acceptor.

This sequence belongs to the class I-like SAM-binding methyltransferase superfamily. Cation-independent O-methyltransferase family. Highly expressed in lupulin glands. Detected in early-, mid- and late-stage cones.

This Humulus lupulus (European hop) protein is Probable O-methyltransferase 3.